Consider the following 170-residue polypeptide: Protein SOB FIVE-LIKE 5 (170 aa).

Positions 10–15 match the SOFL-A motif; sequence SGWTLY. Positions 17–78 are disordered; it reads DQSVSSPSPS…GPRNISEEDS (62 aa). The span at 35-44 shows a compositional bias: basic and acidic residues; sequence DSRRRSKDSW. An SOFL-B motif is present at residues 61–70; sequence SMISDASSGP. The short motif at 79–86 is the Nuclear localization signal element; that stretch reads VKKINIVG.

The protein belongs to the SOFL plant protein family. Expressed in seedlings, roots, flowers and siliques. Barely detectable in leaves.

The protein resides in the cytoplasm. It is found in the nucleus. Its function is as follows. Involved in cytokinin-mediated development. This Arabidopsis thaliana (Mouse-ear cress) protein is Protein SOB FIVE-LIKE 5.